Reading from the N-terminus, the 472-residue chain is Ribosomal RNA small subunit methyltransferase F (472 aa).

S-adenosyl-L-methionine is bound by residues 123-129, Glu-147, Asp-174, and Asp-192; that span reads AAAPGSK. Cys-245 serves as the catalytic Nucleophile.

Belongs to the class I-like SAM-binding methyltransferase superfamily. RsmB/NOP family.

It is found in the cytoplasm. The catalysed reaction is cytidine(1407) in 16S rRNA + S-adenosyl-L-methionine = 5-methylcytidine(1407) in 16S rRNA + S-adenosyl-L-homocysteine + H(+). Specifically methylates the cytosine at position 1407 (m5C1407) of 16S rRNA. The sequence is that of Ribosomal RNA small subunit methyltransferase F from Vibrio vulnificus (strain CMCP6).